The sequence spans 255 residues: MVPWLGPDDPFPSVERALGAASGAPGLLAASADLLPSRLIDAYRRGIFPWYSDGQPVLWWSPDPRMILVPAEFRISATFRKTLKRVLREPRWEIRVDCDFAGVMRACAQAPRRGQRGTWITAEIIDAYSSLHRAGDAHSIETWLDGRRVGGLYGVSFGRMFFGESMYAHASDASKIALAALVAHLREHRVEMIDCQQNTSHLASLGGREIARKTFVAHVRRAVAEPPIPWRFDKRVVAGLLGQAASATAADAFDR.

Belongs to the L/F-transferase family.

The protein localises to the cytoplasm. The catalysed reaction is N-terminal L-lysyl-[protein] + L-leucyl-tRNA(Leu) = N-terminal L-leucyl-L-lysyl-[protein] + tRNA(Leu) + H(+). It catalyses the reaction N-terminal L-arginyl-[protein] + L-leucyl-tRNA(Leu) = N-terminal L-leucyl-L-arginyl-[protein] + tRNA(Leu) + H(+). It carries out the reaction L-phenylalanyl-tRNA(Phe) + an N-terminal L-alpha-aminoacyl-[protein] = an N-terminal L-phenylalanyl-L-alpha-aminoacyl-[protein] + tRNA(Phe). Its function is as follows. Functions in the N-end rule pathway of protein degradation where it conjugates Leu, Phe and, less efficiently, Met from aminoacyl-tRNAs to the N-termini of proteins containing an N-terminal arginine or lysine. The sequence is that of Leucyl/phenylalanyl-tRNA--protein transferase from Burkholderia pseudomallei (strain 1106a).